The following is a 233-amino-acid chain: Ribose-5-phosphate isomerase A (233 aa).

Residues 28-31, 83-86, and 96-99 each bind substrate; these read TGST, DGAD, and KGGG. The active-site Proton acceptor is the Glu105. Lys123 is a substrate binding site.

It belongs to the ribose 5-phosphate isomerase family. In terms of assembly, homodimer.

It catalyses the reaction aldehydo-D-ribose 5-phosphate = D-ribulose 5-phosphate. It participates in carbohydrate degradation; pentose phosphate pathway; D-ribose 5-phosphate from D-ribulose 5-phosphate (non-oxidative stage): step 1/1. Functionally, catalyzes the reversible conversion of ribose-5-phosphate to ribulose 5-phosphate. This is Ribose-5-phosphate isomerase A from Rhizobium rhizogenes (strain K84 / ATCC BAA-868) (Agrobacterium radiobacter).